The chain runs to 495 residues: Cytochrome P450 monooxygenase FrzC (495 aa).

The helical transmembrane segment at 8–28 (GLVVGLWVTYHILLGTYNVFF) threads the bilayer. Heme is bound at residue Cys-437.

This sequence belongs to the cytochrome P450 family. It depends on heme as a cofactor.

It localises to the membrane. It carries out the reaction (S,S)-2,5-di-(p-hydroxybenzyl)piperazine + reduced [NADPH--hemoprotein reductase] + O2 = (1S,4S)-4-[(4-hydroxyphenyl)methyl]-2,5-diazaspiro[bicyclo[3.2.1]octane-6,1'-cyclohexane]-2',5'-dien-4'-one + oxidized [NADPH--hemoprotein reductase] + 2 H2O + H(+). The protein operates within secondary metabolite biosynthesis. In terms of biological role, cytochrome P450 monooxygenase; part of the gene cluster that mediates the biosynthesis of the alkaloid (-)-FR901483, a potent immunosuppressant that shows efficacy in animal models and a probable inhibitor of purine nucleotide biosynthesis by targeting phosphoribosylpyrophosphate amidotransferase (PPAT). Within the pathway, FrzC catalyzes the coupling between N10 and C1' to produce a 1,4-diazabicyclo[3.2.1]octane spiro-fused to a 2,5-cyclohexadienone. FrzC probably first catalyzes homolysis of the N-H bond to generate the N10 radical which is followed by an O-H abstraction to give the phenolic radical which can be delocalized to C1'. Radical coupling between N10 and C1' then forms. The biosynthesis of (-)-FR901483 starts with the condensation of two L-tyrosines to yield (S,S)-dityrosyl-piperazine. This process occurs in 3 steps with the non-canonical nonribosomal peptide synthetase FrzA catalyzing the reduction of L-tyrosine into L-tyrosinal, the spontaneous condensation of 2 L-tyrosinal units, and the subsequent reduction by the NmrA-like family domain-containing oxidoreductase FrzB. The cytochrome P450 monooxygenase FrzC then performs coupling between N10 and C1' to morph the piperazine into a 1,4-diazabicyclo[3.2.1]octane spiro-fused to a 2,5-cyclohexadienone. The dienone portion is further reduced to cyclohexanone by the flavin-dependent reductase FrzD. The methyltranserases (MTs) FrzE and FrzF are then involved in the methylation at the C10' amine and the C4 phenolic oxygen, respectively. The order of the two MTs appear to be interchangeable. Cleavage of the C9-N10' bond by the dioxygenase FrzG then leads to formation of a conjugated iminium. In addition to the oxidation of C9, an additional dehydrogenation between C7 and C8 can occur to give a likely shunt product. The next biosynthetic step is the intramolecular aldol condensation catalyzed by the newly identified aldolase FrzH to yield an aza-tricyclic product with the formation of a C9-C3' bond. The short-chain dehydrogenase/reductase FrzI then produces dephospho-(-)-FR901483 that is phosphorylated at C4'-OH into (-)-FR901483 by the phosphotransferase FrzJ. The sequence is that of Cytochrome P450 monooxygenase FrzC from Cladobotryum sp.